Here is a 276-residue protein sequence, read N- to C-terminus: Cis-2,3-dihydrobiphenyl-2,3-diol dehydrogenase (276 aa).

Position 9 to 33 (9 to 33 (LVTGGGSGLGRAIVDRFVAEGARVA)) interacts with NAD(+). Substrate is bound at residue Ser142. Catalysis depends on Tyr155, which acts as the Proton acceptor.

It belongs to the short-chain dehydrogenases/reductases (SDR) family.

The catalysed reaction is (2R,3S)-3-phenylcyclohexa-3,5-diene-1,2-diol + NAD(+) = biphenyl-2,3-diol + NADH + H(+). It participates in xenobiotic degradation; biphenyl degradation; 2-hydroxy-2,4-pentadienoate and benzoate from biphenyl: step 2/4. The protein is Cis-2,3-dihydrobiphenyl-2,3-diol dehydrogenase (bphB) of Pseudomonas sp. (strain KKS102).